Reading from the N-terminus, the 537-residue chain is uncharacterized protein (537 aa).

An N-terminal signal peptide occupies residues 1–15 (MALFQLFSFLNVTLG). A run of 2 helical transmembrane segments spans residues 459 to 479 (VLFSAISACLSFIIDVGGCCF) and 490 to 510 (VILLLLLLPNYTHLTFILGFT).

It localises to the host membrane. This is an uncharacterized protein from Citrus sinensis (Sweet orange).